The sequence spans 704 residues: Ankyrin repeat and LEM domain-containing protein 1 homolog (704 aa).

The tract at residues 1–29 is disordered; it reads MPPNGAITTTPRSRMPPTTPSSGKSRPKK. Residues 8-22 show a composition bias toward low complexity; the sequence is TTTPRSRMPPTTPSS. ANK repeat units follow at residues 28–59 and 63–93; these read KKET…NVNA and DGAT…PMSA. Disordered regions lie at residues 247-293, 314-358, and 381-421; these read NEDV…SQET, NAGL…ANTT, and SKSA…TTVD. The segment covering 276-288 has biased composition (basic residues); sequence RKQRTPVNHHKRS. Composition is skewed to low complexity over residues 329–346 and 384–405; these read EPAI…TPKT and AKSS…SFSS. The 46-residue stretch at 425–470 folds into the LEM domain; the sequence is IRKIRRLREGELKSELKKFGISPAGPLDARTRRLYEKKLLIERRKI. The 111-residue stretch at 525 to 635 folds into the GIY-YIG domain; that stretch reads YNAFCYLIMD…AVKLKNLRNK (111 aa).

In terms of processing, phosphorylated. Phosphorylated during telophase when localized at the midbody.

It localises to the cytoplasm. The protein resides in the nucleus. It is found in the chromosome. Its subcellular location is the midbody. The protein localises to the cytoskeleton. It localises to the spindle. Inhibited by EDTA. Functionally, endonuclease which, in association with baf-1, plays an essential role during embryogenesis in the DNA repair response following DNA damage probably by ensuring proper chromosome segregation. Also required during postembryonic cell divisions after DNA damage caused by ionizing radiation to ensure normal cell proliferation. Resolves chromatin bridges in late mitosis that result from incomplete DNA replication, defective chromosome condensation or unresolved recombination intermediates. Together with brc-1, contributes to genome integrity by resolving mitotic chromatin bridges that result from incomplete processing of DNA breaks. In parallel to the slx-1/mus-81 pathway, acts in processing early recombination intermediates in meiotic prophase I to prevent illegitimate recombination. Also involved in processing remaining, erroneous recombination intermediates that persist into the second meiotic division. The chain is Ankyrin repeat and LEM domain-containing protein 1 homolog from Caenorhabditis elegans.